A 181-amino-acid polypeptide reads, in one-letter code: uncharacterized protein (181 aa).

This is an uncharacterized protein from Sinorhizobium fredii (strain NBRC 101917 / NGR234).